Reading from the N-terminus, the 567-residue chain is Dihydroxy-acid dehydratase 2 (567 aa).

[2Fe-2S] cluster is bound at residue C56. D88 serves as a coordination point for Mg(2+). C129 contacts [2Fe-2S] cluster. Mg(2+) is bound by residues D130 and K131. At K131 the chain carries N6-carboxylysine. Residue C206 participates in [2Fe-2S] cluster binding. Residue E457 coordinates Mg(2+). The active-site Proton acceptor is S483.

Belongs to the IlvD/Edd family. As to quaternary structure, homodimer. [2Fe-2S] cluster serves as cofactor. It depends on Mg(2+) as a cofactor.

The catalysed reaction is (2R)-2,3-dihydroxy-3-methylbutanoate = 3-methyl-2-oxobutanoate + H2O. It catalyses the reaction (2R,3R)-2,3-dihydroxy-3-methylpentanoate = (S)-3-methyl-2-oxopentanoate + H2O. Its pathway is amino-acid biosynthesis; L-isoleucine biosynthesis; L-isoleucine from 2-oxobutanoate: step 3/4. The protein operates within amino-acid biosynthesis; L-valine biosynthesis; L-valine from pyruvate: step 3/4. Functions in the biosynthesis of branched-chain amino acids. Catalyzes the dehydration of (2R,3R)-2,3-dihydroxy-3-methylpentanoate (2,3-dihydroxy-3-methylvalerate) into 2-oxo-3-methylpentanoate (2-oxo-3-methylvalerate) and of (2R)-2,3-dihydroxy-3-methylbutanoate (2,3-dihydroxyisovalerate) into 2-oxo-3-methylbutanoate (2-oxoisovalerate), the penultimate precursor to L-isoleucine and L-valine, respectively. This Corynebacterium efficiens (strain DSM 44549 / YS-314 / AJ 12310 / JCM 11189 / NBRC 100395) protein is Dihydroxy-acid dehydratase 2.